A 294-amino-acid polypeptide reads, in one-letter code: 33 kDa chaperonin (294 aa).

2 disulfides stabilise this stretch: C238-C240 and C271-C274.

This sequence belongs to the HSP33 family. In terms of processing, under oxidizing conditions two disulfide bonds are formed involving the reactive cysteines. Under reducing conditions zinc is bound to the reactive cysteines and the protein is inactive.

It is found in the cytoplasm. Functionally, redox regulated molecular chaperone. Protects both thermally unfolding and oxidatively damaged proteins from irreversible aggregation. Plays an important role in the bacterial defense system toward oxidative stress. The chain is 33 kDa chaperonin from Clostridium tetani (strain Massachusetts / E88).